A 284-amino-acid polypeptide reads, in one-letter code: Polyamine aminopropyltransferase (284 aa).

In terms of domain architecture, PABS spans 2–237; sequence ELWYTEQHTE…GHWLFGFASK (236 aa). Glutamine 31 is a binding site for S-methyl-5'-thioadenosine. Residues histidine 62 and aspartate 86 each coordinate spermidine. S-methyl-5'-thioadenosine-binding positions include glutamate 106 and 137 to 138; that span reads DG. The active-site Proton acceptor is aspartate 155. 155 to 158 is a spermidine binding site; that stretch reads DSTD. An S-methyl-5'-thioadenosine-binding site is contributed by proline 162.

This sequence belongs to the spermidine/spermine synthase family. As to quaternary structure, homodimer or homotetramer.

The protein localises to the cytoplasm. The catalysed reaction is S-adenosyl 3-(methylsulfanyl)propylamine + putrescine = S-methyl-5'-thioadenosine + spermidine + H(+). It participates in amine and polyamine biosynthesis; spermidine biosynthesis; spermidine from putrescine: step 1/1. Functionally, catalyzes the irreversible transfer of a propylamine group from the amino donor S-adenosylmethioninamine (decarboxy-AdoMet) to putrescine (1,4-diaminobutane) to yield spermidine. The sequence is that of Polyamine aminopropyltransferase from Alkaliphilus oremlandii (strain OhILAs) (Clostridium oremlandii (strain OhILAs)).